The primary structure comprises 308 residues: Shikimate kinase 1, chloroplastic (308 aa).

Residues 1 to 62 constitute a chloroplast transit peptide; sequence MEAGVGLALQ…RGSKPVAPLR (62 aa). 103–110 contributes to the ATP binding site; that stretch reads GMMGSGKS. Position 110 (serine 110) interacts with Mg(2+). Residues aspartate 128, arginine 153, and glycine 175 each contribute to the substrate site. Arginine 214 is a binding site for ATP.

Belongs to the shikimate kinase family. It depends on Mg(2+) as a cofactor. Expressed in panicles.

The protein localises to the plastid. Its subcellular location is the chloroplast. The enzyme catalyses shikimate + ATP = 3-phosphoshikimate + ADP + H(+). It participates in metabolic intermediate biosynthesis; chorismate biosynthesis; chorismate from D-erythrose 4-phosphate and phosphoenolpyruvate: step 5/7. Functionally, catalyzes the specific phosphorylation of the 3-hydroxyl group of shikimic acid using ATP as a cosubstrate. The sequence is that of Shikimate kinase 1, chloroplastic (SK1) from Oryza sativa subsp. japonica (Rice).